The sequence spans 450 residues: tRNA modification GTPase MnmE (450 aa).

R23, E79, and K118 together coordinate (6S)-5-formyl-5,6,7,8-tetrahydrofolate. One can recognise a TrmE-type G domain in the interval 214 to 374 (GITLILVGKP…LKEHILNKVG (161 aa)). N224 is a binding site for K(+). Residues 224 to 229 (NAGKSS), 243 to 249 (TSIAGTT), and 268 to 271 (DTAG) contribute to the GTP site. S228 lines the Mg(2+) pocket. Positions 243, 245, and 248 each coordinate K(+). T249 serves as a coordination point for Mg(2+). K450 is a (6S)-5-formyl-5,6,7,8-tetrahydrofolate binding site.

It belongs to the TRAFAC class TrmE-Era-EngA-EngB-Septin-like GTPase superfamily. TrmE GTPase family. In terms of assembly, homodimer. Heterotetramer of two MnmE and two MnmG subunits. The cofactor is K(+).

Its subcellular location is the cytoplasm. Functionally, exhibits a very high intrinsic GTPase hydrolysis rate. Involved in the addition of a carboxymethylaminomethyl (cmnm) group at the wobble position (U34) of certain tRNAs, forming tRNA-cmnm(5)s(2)U34. The chain is tRNA modification GTPase MnmE from Francisella tularensis subsp. holarctica (strain OSU18).